Here is a 437-residue protein sequence, read N- to C-terminus: Glutamyl-tRNA reductase (437 aa).

Substrate-binding positions include 49–52 (TCNR), Ser109, 114–116 (EGQ), and Gln120. The active-site Nucleophile is Cys50. Residue 198–203 (GAGRMS) participates in NADP(+) binding.

This sequence belongs to the glutamyl-tRNA reductase family. In terms of assembly, homodimer.

It catalyses the reaction (S)-4-amino-5-oxopentanoate + tRNA(Glu) + NADP(+) = L-glutamyl-tRNA(Glu) + NADPH + H(+). It functions in the pathway porphyrin-containing compound metabolism; protoporphyrin-IX biosynthesis; 5-aminolevulinate from L-glutamyl-tRNA(Glu): step 1/2. Its pathway is porphyrin-containing compound metabolism; chlorophyll biosynthesis. Catalyzes the NADPH-dependent reduction of glutamyl-tRNA(Glu) to glutamate 1-semialdehyde (GSA). This Synechococcus sp. (strain CC9311) protein is Glutamyl-tRNA reductase.